Reading from the N-terminus, the 338-residue chain is Ketol-acid reductoisomerase (NADP(+)) (338 aa).

A KARI N-terminal Rossmann domain is found at 1–181 (MKVFYDKDCD…GGGRAGIIET (181 aa)). NADP(+)-binding positions include 24–27 (YGSQ), R47, and S52. H107 is a catalytic residue. G133 contacts NADP(+). Residues 182 to 327 (DFREETETDL…GKLRAMMPWI (146 aa)) form the KARI C-terminal knotted domain. The Mg(2+) site is built by D190, E194, E226, and E230. S251 contacts substrate.

This sequence belongs to the ketol-acid reductoisomerase family. Requires Mg(2+) as cofactor.

It catalyses the reaction (2R)-2,3-dihydroxy-3-methylbutanoate + NADP(+) = (2S)-2-acetolactate + NADPH + H(+). The enzyme catalyses (2R,3R)-2,3-dihydroxy-3-methylpentanoate + NADP(+) = (S)-2-ethyl-2-hydroxy-3-oxobutanoate + NADPH + H(+). The protein operates within amino-acid biosynthesis; L-isoleucine biosynthesis; L-isoleucine from 2-oxobutanoate: step 2/4. Its pathway is amino-acid biosynthesis; L-valine biosynthesis; L-valine from pyruvate: step 2/4. Involved in the biosynthesis of branched-chain amino acids (BCAA). Catalyzes an alkyl-migration followed by a ketol-acid reduction of (S)-2-acetolactate (S2AL) to yield (R)-2,3-dihydroxy-isovalerate. In the isomerase reaction, S2AL is rearranged via a Mg-dependent methyl migration to produce 3-hydroxy-3-methyl-2-ketobutyrate (HMKB). In the reductase reaction, this 2-ketoacid undergoes a metal-dependent reduction by NADPH to yield (R)-2,3-dihydroxy-isovalerate. In Bordetella petrii (strain ATCC BAA-461 / DSM 12804 / CCUG 43448), this protein is Ketol-acid reductoisomerase (NADP(+)).